We begin with the raw amino-acid sequence, 136 residues long: Evasin P991 (136 aa).

The first 28 residues, 1–28, serve as a signal peptide directing secretion; that stretch reads MHSTIVYACLLALAVFVALHGTPLAALA. Residues Asn-41, Asn-61, Asn-64, Asn-78, Asn-92, Asn-100, and Asn-122 are each glycosylated (N-linked (GlcNAc...) asparagine). Intrachain disulfides connect Cys-55/Cys-77, Cys-73/Cys-114, Cys-90/Cys-119, and Cys-109/Cys-128.

It localises to the secreted. Functionally, salivary chemokine-binding protein which has chemokine-neutralizing activity and binds to host chemokines CCL2, CCL3, CCL3L1, CCL4, CCL4L1, CCL5, CCL6, CCL7, CCL8, CCL9, CCL11, CCL12, CCL13, CCL14, CCL16, CCL17, CCL18, CCL19, CCL22, CCL23, CCL24 and CCL27. This Amblyomma cajennense (Cayenne tick) protein is Evasin P991.